Reading from the N-terminus, the 370-residue chain is Coproporphyrin III ferrochelatase (370 aa).

2 residues coordinate Fe-coproporphyrin III: Ser-58 and Tyr-127. Fe(2+)-binding residues include His-189 and Glu-276.

It belongs to the ferrochelatase family.

Its subcellular location is the cytoplasm. The enzyme catalyses Fe-coproporphyrin III + 2 H(+) = coproporphyrin III + Fe(2+). The protein operates within porphyrin-containing compound metabolism; protoheme biosynthesis. In terms of biological role, involved in coproporphyrin-dependent heme b biosynthesis. Catalyzes the insertion of ferrous iron into coproporphyrin III to form Fe-coproporphyrin III. The sequence is that of Coproporphyrin III ferrochelatase from Corynebacterium glutamicum (strain ATCC 13032 / DSM 20300 / JCM 1318 / BCRC 11384 / CCUG 27702 / LMG 3730 / NBRC 12168 / NCIMB 10025 / NRRL B-2784 / 534).